We begin with the raw amino-acid sequence, 420 residues long: MKTLIARHKAGEHIGICSVCSAHPLVIEAALAFDRNSTRKVLIEATSNQVNQFGGYTGMTPADFREFVFAIADKVGFARERIILGGDHLGPNCWQQENADAAMEKSVELVKAYVRAGFSKIHLDASMSCADDSIPLAPETVAERAAVLCLAAESVATDCQREQLNYVIGTEVPVPGGEASAIQSVHITQVEDAANTLRTHQKAFIARGLAEALTRVIAIVVQPGVEFDHSNIIHYQAQEAQALAQWIEKTKMVYEAHSTDYQTQTAYRELVRDHFAILKVGPALTFALREAIFALAQIEQELIAPENRSRCLAVIEDVMLDEPQYWKKYYRTGFNDSLLDIRYSLSDRIRYYWPHSRIKNSVETMMVNLEGVDIPLGMISQYLPKQFERIQSGELSAIPHQLIMDKIYDVLRAYRYGCAE.

It belongs to the GatZ/KbaZ family. GatZ subfamily. Forms a complex with GatY.

The protein operates within carbohydrate metabolism; D-tagatose 6-phosphate degradation; D-glyceraldehyde 3-phosphate and glycerone phosphate from D-tagatose 6-phosphate: step 2/2. Functionally, component of the tagatose-1,6-bisphosphate aldolase GatYZ that is required for full activity and stability of the Y subunit. Could have a chaperone-like function for the proper and stable folding of GatY. When expressed alone, GatZ does not show any aldolase activity. Is involved in the catabolism of galactitol. This Escherichia coli O6:K15:H31 (strain 536 / UPEC) protein is D-tagatose-1,6-bisphosphate aldolase subunit GatZ.